A 306-amino-acid polypeptide reads, in one-letter code: RNA-binding protein Raly (306 aa).

At S2 the chain carries N-acetylserine. A Glycyl lysine isopeptide (Lys-Gly) (interchain with G-Cter in SUMO2) cross-link involves residue K4. The RRM domain maps to 21–92 (SRVFIGNLNT…QTLDINMAGE (72 aa)). At K44 the chain carries N6-acetyllysine. S63 carries the phosphoserine modification. Glycyl lysine isopeptide (Lys-Gly) (interchain with G-Cter in SUMO2) cross-links involve residues K94 and K99. Residues S106 and S135 each carry the phosphoserine modification. K159 is covalently cross-linked (Glycyl lysine isopeptide (Lys-Gly) (interchain with G-Cter in SUMO2)). The residue at position 165 (K165) is an N6-acetyllysine; alternate. K165 is covalently cross-linked (Glycyl lysine isopeptide (Lys-Gly) (interchain with G-Cter in SUMO2); alternate). Residues K179 and K191 each participate in a glycyl lysine isopeptide (Lys-Gly) (interchain with G-Cter in SUMO2) cross-link. The stretch at 183 to 216 (KSSELQAIKTELTQIKSNIDALLSRLEQIAAEQK) forms a coiled coil. Positions 215-306 (QKANPDGKKK…DTDADDGALQ (92 aa)) are disordered. Residues 217–226 (ANPDGKKKGD) show a composition bias toward basic and acidic residues. Residues 227-252 (GGGAGGGGGGGGSGGGGSGGGGGGGS) are compositionally biased toward gly residues. The tract at residues 227–253 (GGGAGGGGGGGGSGGGGSGGGGGGGSS) is epitope (recognized by BKRF1 antibodies). At T262 the chain carries Phosphothreonine. Residue S264 is modified to Phosphoserine. T286 carries the phosphothreonine modification. Residues 287-297 (HSEEELEHSQD) show a composition bias toward basic and acidic residues. S288 and S295 each carry phosphoserine. Residue T298 is modified to Phosphothreonine.

The protein belongs to the RRM HNRPC family. RALY subfamily. In terms of assembly, identified in the spliceosome C complex. Interacts (through its RNA-binding domain) with FUS (through its RNA-binding domain); both are components of the same RNPs. In terms of tissue distribution, expressed in heart, brain, lung, liver, skeletal muscle, kidney and pancreas. Weakly expressed in placenta.

It is found in the nucleus. In terms of biological role, RNA-binding protein that acts as a transcriptional cofactor for cholesterol biosynthetic genes in the liver. Binds the lipid-responsive non-coding RNA LeXis and is required for LeXis-mediated effect on cholesterogenesis. May be a heterogeneous nuclear ribonucleoprotein (hnRNP). The chain is RNA-binding protein Raly (RALY) from Homo sapiens (Human).